Here is a 145-residue protein sequence, read N- to C-terminus: Peptide methionine sulfoxide reductase MsrB (145 aa).

The MsrB domain maps to 6 to 129 (KNERLQQLTD…NSAALRFIPV (124 aa)). The Nucleophile role is filled by Cys-118.

This sequence belongs to the MsrB Met sulfoxide reductase family.

The enzyme catalyses L-methionyl-[protein] + [thioredoxin]-disulfide + H2O = L-methionyl-(R)-S-oxide-[protein] + [thioredoxin]-dithiol. The polypeptide is Peptide methionine sulfoxide reductase MsrB (Listeria monocytogenes serovar 1/2a (strain ATCC BAA-679 / EGD-e)).